Here is a 327-residue protein sequence, read N- to C-terminus: Gamma-gliadin (327 aa).

Residues 1–19 (MKTLLILTILAMAITIGTA) form the signal peptide. Positions 42 to 81 (QPLSQQPQQTFPQPQQTFPHQPQQQVPQPQQPQQPFLQPQ) are enriched in low complexity. The disordered stretch occupies residues 42–169 (QPLSQQPQQT…QPQQSFPQQQ (128 aa)). Composition is skewed to pro residues over residues 82–91 (QPFPQQPQQP), 100–109 (QPFPQQPQQP), and 118–127 (QPFPQQPQQP). The segment covering 128–169 (FPQTQQPQQPFPQLQQPQQPFPQPQQQLPQPQQPQQSFPQQQ) has biased composition (low complexity).

Belongs to the gliadin/glutenin family.

In terms of biological role, gliadin is the major seed storage protein in wheat. This Triticum aestivum (Wheat) protein is Gamma-gliadin.